We begin with the raw amino-acid sequence, 63 residues long: DNA gyrase inhibitor YacG (63 aa).

Cys9, Cys12, Cys28, and Cys32 together coordinate Zn(2+).

It belongs to the DNA gyrase inhibitor YacG family. In terms of assembly, interacts with GyrB. The cofactor is Zn(2+).

Inhibits all the catalytic activities of DNA gyrase by preventing its interaction with DNA. Acts by binding directly to the C-terminal domain of GyrB, which probably disrupts DNA binding by the gyrase. In Salmonella paratyphi A (strain AKU_12601), this protein is DNA gyrase inhibitor YacG.